A 53-amino-acid polypeptide reads, in one-letter code: Conotoxin Cal6.27 (53 aa).

The signal sequence occupies residues 1 to 24 (MKLTCVLIAAMLLLAVCQLDSADA). Cystine bridges form between Cys-29-Cys-43, Cys-36-Cys-47, and Cys-42-Cys-51.

This sequence belongs to the conotoxin O1 superfamily. As to expression, expressed by the venom duct.

It localises to the secreted. In terms of biological role, probable neurotoxin. The polypeptide is Conotoxin Cal6.27 (Californiconus californicus (California cone)).